A 201-amino-acid chain; its full sequence is ATP-dependent Clp protease proteolytic subunit (201 aa).

The active-site Nucleophile is Ser101. His126 is an active-site residue.

It belongs to the peptidase S14 family. Fourteen ClpP subunits assemble into 2 heptameric rings which stack back to back to give a disk-like structure with a central cavity, resembling the structure of eukaryotic proteasomes.

It is found in the cytoplasm. It carries out the reaction Hydrolysis of proteins to small peptides in the presence of ATP and magnesium. alpha-casein is the usual test substrate. In the absence of ATP, only oligopeptides shorter than five residues are hydrolyzed (such as succinyl-Leu-Tyr-|-NHMec, and Leu-Tyr-Leu-|-Tyr-Trp, in which cleavage of the -Tyr-|-Leu- and -Tyr-|-Trp bonds also occurs).. Functionally, cleaves peptides in various proteins in a process that requires ATP hydrolysis. Has a chymotrypsin-like activity. Plays a major role in the degradation of misfolded proteins. The sequence is that of ATP-dependent Clp protease proteolytic subunit from Francisella tularensis subsp. tularensis (strain FSC 198).